Reading from the N-terminus, the 577-residue chain is Aspartate--tRNA(Asp) ligase (577 aa).

Glu-172 contributes to the L-aspartate binding site. An aspartate region spans residues 196 to 199 (QLFK). L-aspartate is bound at residue Arg-218. Residues 218–220 (RDE) and Gln-227 contribute to the ATP site. L-aspartate is bound at residue His-438. Glu-473 serves as a coordination point for ATP. L-aspartate is bound at residue Arg-480. 525–528 (GFDR) serves as a coordination point for ATP.

The protein belongs to the class-II aminoacyl-tRNA synthetase family. Type 1 subfamily. Homodimer.

Its subcellular location is the cytoplasm. The enzyme catalyses tRNA(Asp) + L-aspartate + ATP = L-aspartyl-tRNA(Asp) + AMP + diphosphate. Functionally, catalyzes the attachment of L-aspartate to tRNA(Asp) in a two-step reaction: L-aspartate is first activated by ATP to form Asp-AMP and then transferred to the acceptor end of tRNA(Asp). Is specific for tRNA(Asp) since it cannot aspartylate tRNA(Asn). The protein is Aspartate--tRNA(Asp) ligase (aspS1) of Deinococcus radiodurans (strain ATCC 13939 / DSM 20539 / JCM 16871 / CCUG 27074 / LMG 4051 / NBRC 15346 / NCIMB 9279 / VKM B-1422 / R1).